Here is a 417-residue protein sequence, read N- to C-terminus: UDP-N-acetylglucosamine 1-carboxyvinyltransferase (417 aa).

22–23 is a binding site for phosphoenolpyruvate; that stretch reads KN. R91 serves as a coordination point for UDP-N-acetyl-alpha-D-glucosamine. The Proton donor role is filled by C115. C115 is subject to 2-(S-cysteinyl)pyruvic acid O-phosphothioketal. UDP-N-acetyl-alpha-D-glucosamine is bound by residues 120–124, D304, and I326; that span reads RPVDQ.

The protein belongs to the EPSP synthase family. MurA subfamily.

The protein localises to the cytoplasm. The enzyme catalyses phosphoenolpyruvate + UDP-N-acetyl-alpha-D-glucosamine = UDP-N-acetyl-3-O-(1-carboxyvinyl)-alpha-D-glucosamine + phosphate. It participates in cell wall biogenesis; peptidoglycan biosynthesis. Functionally, cell wall formation. Adds enolpyruvyl to UDP-N-acetylglucosamine. The protein is UDP-N-acetylglucosamine 1-carboxyvinyltransferase of Desulfovibrio desulfuricans (strain ATCC 27774 / DSM 6949 / MB).